Consider the following 263-residue polypeptide: Nicotinamide riboside transporter PnuC (263 aa).

Over 1–40 the chain is Cytoplasmic; that stretch reads MQYGMDSFGLRGIPHQVFIKKKEGKIMSLAWWKRELFGGW. Residues 41-61 form a helical membrane-spanning segment; sequence THFEAVWLLMFLGIQAVVFVF. A topological domain (periplasmic) is located at residue N62. The chain crosses the membrane as a helical span at residues 63–83; it reads PDSWLASVAAVTGILCVVFVG. Topologically, residues 84-86 are cytoplasmic; sequence KGK. A helical membrane pass occupies residues 87–107; sequence ISNYLFGLISVSLYAYVSYTF. Residues 108-109 are Periplasmic-facing; the sequence is KL. A helical transmembrane segment spans residues 110–131; it reads YGEMMLNLLVYVPVQFVGFAMW. Q124 provides a ligand contact to beta-nicotinamide D-riboside. Topologically, residues 132–155 are cytoplasmic; that stretch reads RKHMALGETAETEEVKAKALTVRQ. Residues 156 to 177 traverse the membrane as a helical segment; the sequence is WLLVVAASVVGTSVYIEWLHHL. Topologically, residues 178-180 are periplasmic; the sequence is GSA. Residues 181-201 form a helical membrane-spanning segment; it reads LPTLDGVTVVVSIVAQVLMIL. Q196 contacts beta-nicotinamide D-riboside. Residues 202–205 lie on the Cytoplasmic side of the membrane; the sequence is RYRE. Residues 206 to 226 form a helical membrane-spanning segment; sequence QWALWIVVNILTISLWAVAWF. Beta-nicotinamide D-riboside is bound by residues W210 and N214. At 227–232 the chain is on the periplasmic side; sequence KNGETS. Residues 233 to 253 traverse the membrane as a helical segment; that stretch reads LPLLLMYVMYLCNSVYGYINW. Y242 is a binding site for beta-nicotinamide D-riboside. The Cytoplasmic portion of the chain corresponds to 254–263; the sequence is TKLVKRHSGQ.

The protein belongs to the nicotinamide ribonucleoside (NR) uptake permease (TC 4.B.1) family. Homotrimer.

The protein resides in the cell inner membrane. In terms of biological role, required for nicotinamide riboside transport across the inner membrane. The polypeptide is Nicotinamide riboside transporter PnuC (Neisseria mucosa (strain ATCC 25996 / DSM 4631 / NCTC 10774 / M26)).